A 1148-amino-acid chain; its full sequence is Phospholipid-transporting ATPase IB (1148 aa).

Residues 1 to 44 are Cytoplasmic-facing; the sequence is MSRATSVGDQLEAPARIIYLNQSHLNKFCDNRISTAKYSVLTFL. Threonine 5 is modified (phosphothreonine). The helical transmembrane segment at 45-66 threads the bilayer; sequence PRFLYEQIRRAANAFFLFIALL. Topologically, residues 67 to 71 are exoplasmic loop; sequence QQIPD. The chain crosses the membrane as a helical span at residues 72–94; it reads VSPTGRYTTLVPLVIILTIAGIK. Over 95-276 the chain is Cytoplasmic; the sequence is EIIEDFKRHK…SNVEKVTNVQ (182 aa). A helical transmembrane segment spans residues 277–298; that stretch reads ILVLFGILLVMALVSSVGALFW. Over 299 to 323 the chain is Exoplasmic loop; it reads NGSHGGKSWYIKKMDTNSDNFGYNL. Residues 324-345 form a helical membrane-spanning segment; the sequence is LTFIILYNNLIPISLLVTLEVV. At 346–837 the chain is on the cytoplasmic side; that stretch reads KYTQALFINW…GAWSYNRVTK (492 aa). The active-site 4-aspartylphosphate intermediate is the aspartate 388. ATP contacts are provided by aspartate 388, lysine 389, threonine 390, glutamate 488, phenylalanine 529, lysine 552, arginine 585, threonine 665, glycine 666, aspartate 667, arginine 755, and lysine 761. Residue aspartate 388 coordinates Mg(2+). A Mg(2+)-binding site is contributed by threonine 390. Position 781 (aspartate 781) interacts with Mg(2+). Positions 784 and 785 each coordinate ATP. Residue aspartate 785 coordinates Mg(2+). A helical membrane pass occupies residues 838-858; sequence CILYCFYKNVVLYIIELWFAF. Residues 859–870 lie on the Exoplasmic loop side of the membrane; the sequence is VNGFSGQILFER. Residues 871 to 890 traverse the membrane as a helical segment; sequence WCIGLYNVIFTALPPFTLGI. Over 891 to 920 the chain is Cytoplasmic; it reads FERSCTQESMLRFPQLYRITQNAEGFNTKV. The helical transmembrane segment at 921–942 threads the bilayer; the sequence is FWGHCINALVHSLILFWVPMKA. Residues 943–956 are Exoplasmic loop-facing; sequence LEHDTPVTSGHATD. A helical membrane pass occupies residues 957–979; sequence YLFVGNIVYTYVVVTVCLKAGLE. Residues 980–985 are Cytoplasmic-facing; that stretch reads TTAWTK. The helical transmembrane segment at 986–1006 threads the bilayer; the sequence is FSHLAVWGSMLIWLVFFGVYS. Residues 1007 to 1024 lie on the Exoplasmic loop side of the membrane; sequence TIWPTIPIAPDMKGQATM. Residues 1025–1049 form a helical membrane-spanning segment; that stretch reads VLSSAYFWLGLFLVPTACLIEDVAW. Residues 1050–1148 are Cytoplasmic-facing; sequence RAAKHTCKKT…DTTKENSRKK (99 aa).

Belongs to the cation transport ATPase (P-type) (TC 3.A.3) family. Type IV subfamily. In terms of assembly, component of a P4-ATPase flippase complex which consists of a catalytic alpha subunit and an accessory beta subunit. Interacts with TMEM30A to form a flippase complex. The cofactor is Mg(2+). As to expression, found in testis, heart and brain. Most abundant in testis. Also detected in fetal tissues. Expressed in retinal photoreceptor cells; detected in retina outer nuclear layer and inner segment (at protein level).

Its subcellular location is the membrane. The protein resides in the golgi apparatus membrane. It localises to the endosome membrane. The protein localises to the cell membrane. It is found in the photoreceptor outer segment membrane. Its subcellular location is the photoreceptor inner segment membrane. The enzyme catalyses ATP + H2O + phospholipidSide 1 = ADP + phosphate + phospholipidSide 2.. It carries out the reaction a 1,2-diacyl-sn-glycero-3-phospho-L-serine(out) + ATP + H2O = a 1,2-diacyl-sn-glycero-3-phospho-L-serine(in) + ADP + phosphate + H(+). The catalysed reaction is a 1,2-diacyl-sn-glycero-3-phosphoethanolamine(in) + ATP + H2O = a 1,2-diacyl-sn-glycero-3-phosphoethanolamine(out) + ADP + phosphate + H(+). Functionally, catalytic component of a P4-ATPase flippase complex which catalyzes the hydrolysis of ATP coupled to the transport of aminophospholipids from the outer to the inner leaflet of various membranes and ensures the maintenance of asymmetric distribution of phospholipids. Able to translocate phosphatidylserine, but not phosphatidylcholine. Phospholipid translocation also seems to be implicated in vesicle formation and in uptake of lipid signaling molecules. Reconstituted to liposomes, the ATP8A2:TMEM30A flippase complex predominantly transports phosphatidylserine (PS) and to a lesser extent phosphatidylethanolamine (PE). Phospholipid translocation is not associated with a countertransport of an inorganic ion or other charged substrate from the cytoplasmic side toward the exoplasm in connection with the phosphorylation from ATP. ATP8A2:TMEM30A may be involved in regulation of neurite outgrowth. Proposed to function in the generation and maintenance of phospholipid asymmetry in photoreceptor disk membranes and neuronal axon membranes. May be involved in vesicle trafficking in neuronal cells. Required for normal visual and auditory function; involved in photoreceptor and inner ear spiral ganglion cell survival. This chain is Phospholipid-transporting ATPase IB, found in Mus musculus (Mouse).